We begin with the raw amino-acid sequence, 435 residues long: ATP-dependent RNA helicase RhlB (435 aa).

Residues 9-37 carry the Q motif motif; it reads QKFADFSLQTEIKTALNESGFEYCTPIQA. The Helicase ATP-binding domain maps to 40 to 219; that stretch reads LPILLQKKDI…YDHMNEPEKV (180 aa). 53–60 provides a ligand contact to ATP; that stretch reads AQTGTGKT. Positions 165–168 match the DEAD box motif; sequence DEAD. Residues 243–390 enclose the Helicase C-terminal domain; it reads KMRLLLTLLE…VTNYDSEALL (148 aa). The tract at residues 395-435 is disordered; that stretch reads APVRVHRKHNSRPQGRSGSGGKPRSGNRNAPRRHDKTRRHS. Over residues 424–435 the composition is skewed to basic residues; sequence APRRHDKTRRHS.

This sequence belongs to the DEAD box helicase family. RhlB subfamily. In terms of assembly, component of the RNA degradosome, which is a multiprotein complex involved in RNA processing and mRNA degradation.

It localises to the cytoplasm. The catalysed reaction is ATP + H2O = ADP + phosphate + H(+). Its function is as follows. DEAD-box RNA helicase involved in RNA degradation. Has RNA-dependent ATPase activity and unwinds double-stranded RNA. This is ATP-dependent RNA helicase RhlB from Shewanella sediminis (strain HAW-EB3).